Reading from the N-terminus, the 149-residue chain is Probable ubiquitin-conjugating enzyme E2 W (149 aa).

Positions 4 to 149 constitute a UBC core domain; the sequence is RYAKRLQKEL…VRWMFHDDTV (146 aa). C88 serves as the catalytic Glycyl thioester intermediate.

The protein belongs to the ubiquitin-conjugating enzyme family.

The catalysed reaction is S-ubiquitinyl-[E1 ubiquitin-activating enzyme]-L-cysteine + [E2 ubiquitin-conjugating enzyme]-L-cysteine = [E1 ubiquitin-activating enzyme]-L-cysteine + S-ubiquitinyl-[E2 ubiquitin-conjugating enzyme]-L-cysteine.. The enzyme catalyses S-ubiquitinyl-[E1 ubiquitin-activating enzyme]-L-cysteine + [acceptor protein]-N-terminal-amino acid = [E1 ubiquitin-activating enzyme]-L-cysteine + N-terminal-ubiquitinyl-[acceptor protein].. Its pathway is protein modification; protein ubiquitination. In terms of biological role, catalyzes the covalent attachment of ubiquitin to other proteins. This is Probable ubiquitin-conjugating enzyme E2 W (ube2w) from Dictyostelium discoideum (Social amoeba).